A 419-amino-acid polypeptide reads, in one-letter code: Bilin biosynthesis protein CpeY (419 aa).

In terms of biological role, involved in the biosynthesis of bilin. The protein is Bilin biosynthesis protein CpeY (cpeY) of Synechococcus sp. (strain WH8020).